The primary structure comprises 701 residues: MTALNPVLFLLCGVSVSLSLKVVSKRGSVDGCTDWSVDYLKYRVLHGEPVRIKCALFYGYIRANYTQAQSIGLSLMWYRSSGLGHGDFEEPISFDGTRMSKEEDAIWFRPAELQDAGLYSCVLRNSTFCMKVSMTLLVADNDTAGCYNSKLRYTEKGELGKSKDISCPDIQDYVQPGEKPQITWYKECNVQQWRSSVLQTADLLAIQDVREDDIGNYTCELLFGGFLVRRTTYLSVTAPLTEEPPRILFPSENKLLAMDVQLGSMLNLTCRAFFGYSGDISPLVYWMKGEKFIEDMDQSRIRESEIKTVREHLGEQEVSITLTIDSLEEVDLGNYSCYAENGNGRRQANVQIGKRVELMYTVELAGGLGAILLLLALLLSVYKCYRIELLLCYRHHFGGEDTDGDNKEYDAYLSYSKVELDQWGQELQEEERFALEILPDVLEKHYGYKLFIPDRDLIPTSTYIEDVSRCVDMSKRLIIVLTPSYVLRRGWSIFELESRLRNSLVSGDIKVILIECADLRGVINYQEVEELKQSIKCLSVVHWNGPQSNKPGSRFWKQLRYTMPYRRPQQTITNHALDTSEPGPFADLQTVSAISMATATSAALAPAHPELRPSLRSSYRSHSLARQKHSHYRSYDYELPFTAGGTLPPQHTYCNLPLTLLNGQRPVNNKTLRQHSLDEHHGNNAMLPLLPRETSISSVIW.

An N-terminal signal peptide occupies residues 1-19 (MTALNPVLFLLCGVSVSLS). Over 20 to 361 (LKVVSKRGSV…IGKRVELMYT (342 aa)) the chain is Extracellular. Positions 33-133 (TDWSVDYLKY…RNSTFCMKVS (101 aa)) constitute an Ig-like C2-type 1 domain. A disulfide bridge links C54 with C121. 6 N-linked (GlcNAc...) asparagine glycosylation sites follow: N64, N125, N141, N216, N267, and N334. Ig-like C2-type domains are found at residues 146–235 (CYNS…TYLS) and 245–353 (PRIL…VQIG). C167 and C219 are joined by a disulfide. A disulfide bridge links C270 with C337. The helical transmembrane segment at 362 to 382 (VELAGGLGAILLLLALLLSVY) threads the bilayer. The Cytoplasmic portion of the chain corresponds to 383 to 701 (KCYRIELLLC…RETSISSVIW (319 aa)). A TIR domain is found at 407-563 (KEYDAYLSYS…RFWKQLRYTM (157 aa)). Residue E495 is part of the active site. Residues 568-701 (PQQTITNHAL…RETSISSVIW (134 aa)) form a required for synaptic vesicle accumulation during synaptogenesis region.

This sequence belongs to the interleukin-1 receptor family.

The protein resides in the cell membrane. It localises to the cytoplasm. The catalysed reaction is NAD(+) + H2O = ADP-D-ribose + nicotinamide + H(+). Functionally, may regulate secretion and presynaptic differentiation through inhibition of the activity of N-type voltage-gated calcium channel. During presynaptic differentiation may regulate both synaptic vesicle accumulation in axon terminals and subsequent axon terminal remodeling. This is Interleukin-1 receptor accessory protein-like 1-A (il1rapl1a) from Danio rerio (Zebrafish).